The primary structure comprises 204 residues: Histone chaperone ASF1A (204 aa).

The interaction with histone H3, CHAF1B, and HIRA stretch occupies residues 1–156 (MAKVQVNNVV…TRFHINWEDN (156 aa)). A Required for interaction with HIRA motif is present at residues 31 to 37 (IEDLSED). The interval 155-204 (DNTEKLEDAESSNPNLPSLLSTDALPSASKGWSTSENSLNVMLESHMDCM) is required for interaction with HIRA. Ser-192 is modified (phosphoserine; by TLK2).

It belongs to the ASF1 family. Interacts with histone H3 (via C-terminus), including histone H3.1, H3.2 and H3.3, and histone H4; the interaction with H3 is direct. Probably interacts with the heterodimeric form of H3-H4 taking the place of the second dimer. Interacts with the CHAF1A, CHAF1B and RBBP4 subunits of the CAF-1 complex. Interacts with CABIN1, HAT1, HIRA, NASP, TAF1 and UBN1. Found in a soluble complex with NASP and histones H3 and H4; the interaction with NASP is probably indirect and mediated by H3-H4. Interacts with CDAN1. Found in a cytosolic complex with IPO4 and histones H3 and H4. Interacts with CREBBP. Phosphorylated by TLK1 and TLK2. Highly phosphorylated in S-phase and at lower levels in M-phase. TLK2-mediated phosphorylation at Ser-192 prevents proteasome-dependent degradation.

The protein resides in the nucleus. Its function is as follows. Histone chaperone that facilitates histone deposition and histone exchange and removal during nucleosome assembly and disassembly. Cooperates with chromatin assembly factor 1 (CAF-1) to promote replication-dependent chromatin assembly and with HIRA to promote replication-independent chromatin assembly. Promotes homologous recombination-mediated repair of double-strand breaks (DSBs) at stalled or collapsed replication forks: acts by mediating histone replacement at DSBs, leading to recruitment of the MMS22L-TONSL complex and subsequent loading of RAD51. Also involved in the nuclear import of the histone H3-H4 dimer together with importin-4 (IPO4): specifically recognizes and binds newly synthesized histones with the monomethylation of H3 'Lys-9' and acetylation at 'Lys-14' (H3K9me1K14ac) marks, and diacetylation at 'Lys-5' and 'Lys-12' of H4 (H4K5K12ac) marks in the cytosol. Required for the formation of senescence-associated heterochromatin foci (SAHF) and efficient senescence-associated cell cycle exit. The polypeptide is Histone chaperone ASF1A (ASF1A) (Bos taurus (Bovine)).